The chain runs to 683 residues: Boron transporter 4 (683 aa).

Over 1 to 38 the chain is Cytoplasmic; it reads MEEERVDSSKRLFRGIVADLRGRALCYKEDWVAGLRSG. A helical membrane pass occupies residues 39–59; it reads FGILAPTTYIFFASALPVIAF. Over 60–80 the chain is Extracellular; sequence GEQLSRDTEGALSTVETLAST. A helical transmembrane segment spans residues 81–101; sequence ALCGVIHSILGGQPLLILGVA. Residues 102–126 are Cytoplasmic-facing; sequence EPTVLMYVYLYNFAIGRPELGKQLY. Residues 127–147 traverse the membrane as a helical segment; that stretch reads LAWAAWVCVWTALLLFVMAIL. At 148 to 160 the chain is on the extracellular side; sequence NTADIINRFTRVA. Residues 161–181 traverse the membrane as a helical segment; that stretch reads GELFGMLISVLFIQQAIKGMV. Residues 182 to 200 lie on the Cytoplasmic side of the membrane; that stretch reads SEFGMPKDEDSKLEKYKFE. Residues 201–221 traverse the membrane as a helical segment; that stretch reads WLYTNGLLGLIFTFGLLYTAL. At 222–238 the chain is on the extracellular side; that stretch reads KSRKARSWRYGTGWYRS. Residues 239–259 traverse the membrane as a helical segment; the sequence is FIADYGVPLMVVVWTALSFST. Topologically, residues 260-294 are cytoplasmic; it reads PSKLPSGVPRRLFSPLPWDSPSLSHWTVIKDMGKV. The helical transmembrane segment at 295–315 threads the bilayer; the sequence is SPGYIFAAFIPALMIAGLYFF. Over 316 to 335 the chain is Extracellular; sequence DHSVASQLAQQKEFNLKKPS. A helical membrane pass occupies residues 336-356; the sequence is AYHYDILLLGFMTLICGLLGL. The Cytoplasmic segment spans residues 357–477; it reads PPSNGVLPQS…EQRVSNLLQS (121 aa). The chain crosses the membrane as a helical span at residues 478 to 498; it reads LLVAGAVLAMPAIKLIPTSIL. At 499–565 the chain is on the extracellular side; that stretch reads WGYFAYMAID…QIFYFGLCYG (67 aa). Residues 566 to 586 traverse the membrane as a helical segment; the sequence is VTWIPVAGIMFPVPFFLLIAI. Residues 587–683 are Cytoplasmic-facing; that stretch reads RQYILPKLFN…GDGDMSTTRE (97 aa). Disordered regions lie at residues 617-638 and 661-683; these read NPLELSFRSNDSKRGVQEGDAE and KGNQIYPKEKVKAGDGDMSTTRE.

Belongs to the anion exchanger (TC 2.A.31.3) family. As to expression, expressed in the distal sides of epidermal cells in the elongation zone of roots.

The protein localises to the membrane. Functionally, efflux-type boron transporter polarly localized in roots. Boron is essential for maintaining the integrity of plants cell walls. The sequence is that of Boron transporter 4 (BOR4) from Arabidopsis thaliana (Mouse-ear cress).